We begin with the raw amino-acid sequence, 250 residues long: Ubiquinone/menaquinone biosynthesis C-methyltransferase UbiE (250 aa).

Residues T73, D94, 122-123, and S139 each bind S-adenosyl-L-methionine; that span reads NA.

Belongs to the class I-like SAM-binding methyltransferase superfamily. MenG/UbiE family.

The enzyme catalyses a 2-demethylmenaquinol + S-adenosyl-L-methionine = a menaquinol + S-adenosyl-L-homocysteine + H(+). It carries out the reaction a 2-methoxy-6-(all-trans-polyprenyl)benzene-1,4-diol + S-adenosyl-L-methionine = a 5-methoxy-2-methyl-3-(all-trans-polyprenyl)benzene-1,4-diol + S-adenosyl-L-homocysteine + H(+). It participates in quinol/quinone metabolism; menaquinone biosynthesis; menaquinol from 1,4-dihydroxy-2-naphthoate: step 2/2. It functions in the pathway cofactor biosynthesis; ubiquinone biosynthesis. Functionally, methyltransferase required for the conversion of demethylmenaquinol (DMKH2) to menaquinol (MKH2) and the conversion of 2-polyprenyl-6-methoxy-1,4-benzoquinol (DDMQH2) to 2-polyprenyl-3-methyl-6-methoxy-1,4-benzoquinol (DMQH2). The chain is Ubiquinone/menaquinone biosynthesis C-methyltransferase UbiE from Francisella tularensis subsp. tularensis (strain WY96-3418).